Consider the following 412-residue polypeptide: NADH-quinone oxidoreductase subunit D (412 aa).

The protein belongs to the complex I 49 kDa subunit family. NDH-1 is composed of 14 different subunits. Subunits NuoB, C, D, E, F, and G constitute the peripheral sector of the complex.

The protein localises to the cell inner membrane. It carries out the reaction a quinone + NADH + 5 H(+)(in) = a quinol + NAD(+) + 4 H(+)(out). In terms of biological role, NDH-1 shuttles electrons from NADH, via FMN and iron-sulfur (Fe-S) centers, to quinones in the respiratory chain. The immediate electron acceptor for the enzyme in this species is believed to be a menaquinone. Couples the redox reaction to proton translocation (for every two electrons transferred, four hydrogen ions are translocated across the cytoplasmic membrane), and thus conserves the redox energy in a proton gradient. This is NADH-quinone oxidoreductase subunit D from Flavobacterium psychrophilum (strain ATCC 49511 / DSM 21280 / CIP 103535 / JIP02/86).